Reading from the N-terminus, the 153-residue chain is 6,7-dimethyl-8-ribityllumazine synthase (153 aa).

Residues F22, A56–E58, and A80–I82 contribute to the 5-amino-6-(D-ribitylamino)uracil site. S85–T86 is a binding site for (2S)-2-hydroxy-3-oxobutyl phosphate. The active-site Proton donor is H88. Position 113 (F113) interacts with 5-amino-6-(D-ribitylamino)uracil. R127 contacts (2S)-2-hydroxy-3-oxobutyl phosphate.

Belongs to the DMRL synthase family.

The catalysed reaction is (2S)-2-hydroxy-3-oxobutyl phosphate + 5-amino-6-(D-ribitylamino)uracil = 6,7-dimethyl-8-(1-D-ribityl)lumazine + phosphate + 2 H2O + H(+). It participates in cofactor biosynthesis; riboflavin biosynthesis; riboflavin from 2-hydroxy-3-oxobutyl phosphate and 5-amino-6-(D-ribitylamino)uracil: step 1/2. Functionally, catalyzes the formation of 6,7-dimethyl-8-ribityllumazine by condensation of 5-amino-6-(D-ribitylamino)uracil with 3,4-dihydroxy-2-butanone 4-phosphate. This is the penultimate step in the biosynthesis of riboflavin. This chain is 6,7-dimethyl-8-ribityllumazine synthase, found in Clostridium botulinum (strain Eklund 17B / Type B).